Consider the following 61-residue polypeptide: Large ribosomal subunit protein uL30 (61 aa).

The protein belongs to the universal ribosomal protein uL30 family. Part of the 50S ribosomal subunit.

This is Large ribosomal subunit protein uL30 from Latilactobacillus sakei subsp. sakei (strain 23K) (Lactobacillus sakei subsp. sakei).